An 86-amino-acid polypeptide reads, in one-letter code: Large ribosomal subunit protein bL31 (86 aa).

The tract at residues 65–86 (YGMASSDSSEQKDKSSEEKKES) is disordered. The segment covering 73–86 (SEQKDKSSEEKKES) has biased composition (basic and acidic residues).

Belongs to the bacterial ribosomal protein bL31 family. Type A subfamily. Part of the 50S ribosomal subunit.

Its function is as follows. Binds the 23S rRNA. The polypeptide is Large ribosomal subunit protein bL31 (Prochlorococcus marinus (strain NATL2A)).